The following is a 35-amino-acid chain: Mu-theraphotoxin-Hhn1a (35 aa).

3 disulfide bridges follow: cysteine 2–cysteine 17, cysteine 9–cysteine 24, and cysteine 16–cysteine 31.

It belongs to the neurotoxin 10 (Hwtx-1) family. 22 (Htx-4) subfamily. In terms of assembly, monomer. As to expression, expressed by the venom gland.

It is found in the secreted. Its function is as follows. Inhibits selectively tetrodotoxin-sensitive voltage-gated sodium channels (Nav). Does not act by binding to receptor site 3 to slow the inactivation kinetics of sodium currents. This Cyriopagopus hainanus (Chinese bird spider) protein is Mu-theraphotoxin-Hhn1a.